The sequence spans 99 residues: Aspartyl/glutamyl-tRNA(Asn/Gln) amidotransferase subunit C (99 aa).

It belongs to the GatC family. As to quaternary structure, heterotrimer of A, B and C subunits.

It catalyses the reaction L-glutamyl-tRNA(Gln) + L-glutamine + ATP + H2O = L-glutaminyl-tRNA(Gln) + L-glutamate + ADP + phosphate + H(+). The catalysed reaction is L-aspartyl-tRNA(Asn) + L-glutamine + ATP + H2O = L-asparaginyl-tRNA(Asn) + L-glutamate + ADP + phosphate + 2 H(+). Functionally, allows the formation of correctly charged Asn-tRNA(Asn) or Gln-tRNA(Gln) through the transamidation of misacylated Asp-tRNA(Asn) or Glu-tRNA(Gln) in organisms which lack either or both of asparaginyl-tRNA or glutaminyl-tRNA synthetases. The reaction takes place in the presence of glutamine and ATP through an activated phospho-Asp-tRNA(Asn) or phospho-Glu-tRNA(Gln). The protein is Aspartyl/glutamyl-tRNA(Asn/Gln) amidotransferase subunit C of Delftia acidovorans (strain DSM 14801 / SPH-1).